A 490-amino-acid chain; its full sequence is Acetyl-coenzyme A carboxylase carboxyl transferase subunit beta, chloroplastic (490 aa).

Residues 184 to 203 (LNSSENEGSSRRTRTKGSDL) form a disordered region. The CoA carboxyltransferase N-terminal domain occupies 221–490 (LWVQCENCYG…PLNQKSSKIK (270 aa)). Cys225, Cys228, Cys244, and Cys247 together coordinate Zn(2+). The C4-type zinc-finger motif lies at 225–247 (CENCYGLNYKKFLKSKMNICEQC).

Belongs to the AccD/PCCB family. As to quaternary structure, acetyl-CoA carboxylase is a heterohexamer composed of biotin carboxyl carrier protein, biotin carboxylase and 2 subunits each of ACCase subunit alpha and ACCase plastid-coded subunit beta (accD). Zn(2+) is required as a cofactor.

It localises to the plastid. It is found in the chloroplast stroma. The enzyme catalyses N(6)-carboxybiotinyl-L-lysyl-[protein] + acetyl-CoA = N(6)-biotinyl-L-lysyl-[protein] + malonyl-CoA. The protein operates within lipid metabolism; malonyl-CoA biosynthesis; malonyl-CoA from acetyl-CoA: step 1/1. Component of the acetyl coenzyme A carboxylase (ACC) complex. Biotin carboxylase (BC) catalyzes the carboxylation of biotin on its carrier protein (BCCP) and then the CO(2) group is transferred by the transcarboxylase to acetyl-CoA to form malonyl-CoA. The polypeptide is Acetyl-coenzyme A carboxylase carboxyl transferase subunit beta, chloroplastic (Solanum bulbocastanum (Wild potato)).